The sequence spans 188 residues: Peptidyl-prolyl cis-trans isomerase H (188 aa).

Residue Ala2 is modified to N-acetylalanine. The PPIase cyclophilin-type domain maps to 14-176; the sequence is FFDVSIGGQE…WTHSLTCPAL (163 aa).

The protein belongs to the cyclophilin-type PPIase family. PPIase H subfamily. In terms of assembly, interacts directly with PRPF4. Part of a heteromeric complex containing PPIH, PRPF3 and PRPF4 that is stable in the absence of RNA. Component of the U4/U6-U5 tri-snRNP complex composed of the U4, U6 and U5 snRNAs and at least PRPF3, PRPF4, PRPF6, PRPF8, PRPF31, SNRNP200, TXNL4A, SNRNP40, DDX23, CD2BP2, PPIH, SNU13, EFTUD2, SART1 and USP39. Heterodimer with PRPF18. Heterodimer with PRPF18.

Its subcellular location is the nucleus speckle. It localises to the cytoplasm. It catalyses the reaction [protein]-peptidylproline (omega=180) = [protein]-peptidylproline (omega=0). Inhibited by cyclosporin A. Its function is as follows. PPIase that catalyzes the cis-trans isomerization of proline imidic peptide bonds in oligopeptides and may therefore assist protein folding. Participates in pre-mRNA splicing. May play a role in the assembly of the U4/U5/U6 tri-snRNP complex, one of the building blocks of the spliceosome. May act as a chaperone. This chain is Peptidyl-prolyl cis-trans isomerase H (Ppih), found in Mus musculus (Mouse).